A 321-amino-acid chain; its full sequence is Cytochrome c biogenesis protein CcsA (321 aa).

The next 7 membrane-spanning stretches (helical) occupy residues 9–29 (ILTHISFSTISIVITIHLITL), 44–64 (GMIATFFSITGFLVSRWVSSG), 68–88 (LSNLYESLIFLSWTLYILHTI), 143–163 (MLLSYATLLCGSLLSAALLII), 225–245 (VISLGFTLLTVGILCGAVWAN), 259–273 (TWAFITWTIFAIYLH), and 288–308 (VASIGFLIIWICYFGINLLGI).

The protein belongs to the CcmF/CycK/Ccl1/NrfE/CcsA family. May interact with Ccs1.

It is found in the plastid. The protein resides in the chloroplast thylakoid membrane. Its function is as follows. Required during biogenesis of c-type cytochromes (cytochrome c6 and cytochrome f) at the step of heme attachment. This Saccharum hybrid (Sugarcane) protein is Cytochrome c biogenesis protein CcsA.